A 97-amino-acid polypeptide reads, in one-letter code: Aspartyl/glutamyl-tRNA(Asn/Gln) amidotransferase subunit C (97 aa).

It belongs to the GatC family. Heterotrimer of A, B and C subunits.

It catalyses the reaction L-glutamyl-tRNA(Gln) + L-glutamine + ATP + H2O = L-glutaminyl-tRNA(Gln) + L-glutamate + ADP + phosphate + H(+). It carries out the reaction L-aspartyl-tRNA(Asn) + L-glutamine + ATP + H2O = L-asparaginyl-tRNA(Asn) + L-glutamate + ADP + phosphate + 2 H(+). Its function is as follows. Allows the formation of correctly charged Asn-tRNA(Asn) or Gln-tRNA(Gln) through the transamidation of misacylated Asp-tRNA(Asn) or Glu-tRNA(Gln) in organisms which lack either or both of asparaginyl-tRNA or glutaminyl-tRNA synthetases. The reaction takes place in the presence of glutamine and ATP through an activated phospho-Asp-tRNA(Asn) or phospho-Glu-tRNA(Gln). The sequence is that of Aspartyl/glutamyl-tRNA(Asn/Gln) amidotransferase subunit C from Synechococcus sp. (strain JA-3-3Ab) (Cyanobacteria bacterium Yellowstone A-Prime).